Consider the following 297-residue polypeptide: Bilin biosynthesis protein MpeU (297 aa).

It belongs to the CpcE/RpcE/PecE family.

An enzyme involved in the biosynthesis of bilin. This is Bilin biosynthesis protein MpeU (mpeU) from Synechococcus sp. (strain WH8020).